A 507-amino-acid chain; its full sequence is Maturase K (507 aa).

Belongs to the intron maturase 2 family. MatK subfamily.

The protein resides in the plastid. It localises to the chloroplast. Its function is as follows. Usually encoded in the trnK tRNA gene intron. Probably assists in splicing its own and other chloroplast group II introns. This is Maturase K from Ranunculus repens (Creeping buttercup).